Reading from the N-terminus, the 435-residue chain is 3-ketoacyl-CoA thiolase (435 aa).

C98 acts as the Acyl-thioester intermediate in catalysis. Active-site proton acceptor residues include H391 and C421.

This sequence belongs to the thiolase-like superfamily. Thiolase family. In terms of assembly, heterotetramer of two alpha chains (FadJ) and two beta chains (FadI).

It is found in the cytoplasm. The enzyme catalyses an acyl-CoA + acetyl-CoA = a 3-oxoacyl-CoA + CoA. Its pathway is lipid metabolism; fatty acid beta-oxidation. In terms of biological role, catalyzes the final step of fatty acid oxidation in which acetyl-CoA is released and the CoA ester of a fatty acid two carbons shorter is formed. The chain is 3-ketoacyl-CoA thiolase from Vibrio vulnificus (strain YJ016).